The primary structure comprises 838 residues: V-type proton ATPase 116 kDa subunit a 1 (838 aa).

Over 1–388 (MGELFRSEEM…DAYGIGTYRE (388 aa)) the chain is Cytoplasmic. 2 positions are modified to phosphothreonine: T250 and T360. Y364 is modified (phosphotyrosine). Residues 389–407 (INPAPYTVITFPFLFAVMF) form a helical membrane-spanning segment. Residues 408–409 (GD) are Vacuolar-facing. Residues 410–426 (FGHGILMTLFAVWMVLR) traverse the membrane as a helical segment. Topologically, residues 427-441 (ESRILSQKNENEMFS) are cytoplasmic. A helical membrane pass occupies residues 442 to 471 (MVFSGRYIILLMGLFSIYTGLIYNDCFSKS). Topologically, residues 472-535 (LNIFGSSWSV…ATNKLTFLNS (64 aa)) are vacuolar. Residues 536 to 555 (FKMKMSVILGIIHMLFGVSL) traverse the membrane as a helical segment. Residues 556–573 (SLFNHIYFKKPLNIYFGF) are Cytoplasmic-facing. The chain crosses the membrane as a helical span at residues 574–594 (IPEIIFMSSLFGYLVILIFYK). Topologically, residues 595–639 (WTAYDAHSSRNAPSLLIHFINMFLFSYPESGNAMLYSGQKGIQCF) are vacuolar. Residues 640 to 659 (LIVVAMLCVPWMLLFKPLIL) form a helical membrane-spanning segment. The Cytoplasmic segment spans residues 660-725 (RHQYLRKKHL…DTMVHQAIHT (66 aa)). Residues 726-750 (IEYCLGCISNTASYLRLWALSLAHA) traverse the membrane as a helical segment. At 751 to 771 (QLSEVLWTMVIHIGLHVRSLA) the chain is on the vacuolar side. Residues 772–810 (GGLGLFFIFAAFATLTVAILLIMEGLSAFLHALRLHWVE) traverse the membrane as a helical segment. At 811–838 (FQNKFYTGTGFKFLPFSFEHIREGKFDE) the chain is on the cytoplasmic side.

It belongs to the V-ATPase 116 kDa subunit family. V-ATPase is a heteromultimeric enzyme made up of two complexes: the ATP-hydrolytic V1 complex and the proton translocation V0 complex. The V1 complex consists of three catalytic AB heterodimers that form a heterohexamer, three peripheral stalks each consisting of EG heterodimers, one central rotor including subunits D and F, and the regulatory subunits C and H. The proton translocation complex V0 consists of the proton transport subunit a, a ring of proteolipid subunits c9c'', rotary subunit d, subunits e and f, and the accessory subunits ATP6AP1/Ac45 and ATP6AP2/PRR. Interacts with SPAAR. As to expression, expressed in brain (at protein level). Expressed in heart, kidney, liver, spleen, and to a lesser extent in brain.

It localises to the cytoplasmic vesicle. The protein resides in the clathrin-coated vesicle membrane. Its subcellular location is the secretory vesicle. The protein localises to the synaptic vesicle membrane. It is found in the melanosome. Subunit of the V0 complex of vacuolar(H+)-ATPase (V-ATPase), a multisubunit enzyme composed of a peripheral complex (V1) that hydrolyzes ATP and a membrane integral complex (V0) that translocates protons. V-ATPase is responsible for the acidification of various organelles, such as lysosomes, endosomes, the trans-Golgi network, and secretory granules, including synaptic vesicles. In certain cell types, can be exported to the plasma membrane, where it is involved in the acidification of the extracellular environment. Required for assembly and activity of the vacuolar ATPase. Through its action on compartment acidification, plays an essential role in neuronal development in terms of integrity and connectivity of neurons. This is V-type proton ATPase 116 kDa subunit a 1 (Atp6v0a1) from Rattus norvegicus (Rat).